The primary structure comprises 116 residues: Iron-sulfur cluster insertion protein ErpA (116 aa).

Iron-sulfur cluster is bound by residues C44, C108, and C110.

This sequence belongs to the HesB/IscA family. Homodimer. Iron-sulfur cluster serves as cofactor.

Required for insertion of 4Fe-4S clusters for at least IspG. In Pseudomonas putida (strain ATCC 47054 / DSM 6125 / CFBP 8728 / NCIMB 11950 / KT2440), this protein is Iron-sulfur cluster insertion protein ErpA.